Consider the following 264-residue polypeptide: Glutamate racemase (264 aa).

Substrate-binding positions include 10–11 (DS) and 42–43 (YG). Cys73 acts as the Proton donor/acceptor in catalysis. Residue 74–75 (NT) participates in substrate binding. Residue Cys183 is the Proton donor/acceptor of the active site. A substrate-binding site is contributed by 184 to 185 (TH).

The protein belongs to the aspartate/glutamate racemases family.

The catalysed reaction is L-glutamate = D-glutamate. Its pathway is cell wall biogenesis; peptidoglycan biosynthesis. Provides the (R)-glutamate required for cell wall biosynthesis. This Streptococcus pyogenes serotype M49 (strain NZ131) protein is Glutamate racemase.